Here is a 946-residue protein sequence, read N- to C-terminus: Bifunctional glutamine synthetase adenylyltransferase/adenylyl-removing enzyme (946 aa).

Positions 1–440 (MKPLSSPLQQ…VFNELIGDDE (440 aa)) are adenylyl removase. An adenylyl transferase region spans residues 449 to 946 (SEQWRELWQD…ASWQKWLVEE (498 aa)).

The protein belongs to the GlnE family. Requires Mg(2+) as cofactor.

The catalysed reaction is [glutamine synthetase]-O(4)-(5'-adenylyl)-L-tyrosine + phosphate = [glutamine synthetase]-L-tyrosine + ADP. The enzyme catalyses [glutamine synthetase]-L-tyrosine + ATP = [glutamine synthetase]-O(4)-(5'-adenylyl)-L-tyrosine + diphosphate. In terms of biological role, involved in the regulation of glutamine synthetase GlnA, a key enzyme in the process to assimilate ammonia. When cellular nitrogen levels are high, the C-terminal adenylyl transferase (AT) inactivates GlnA by covalent transfer of an adenylyl group from ATP to specific tyrosine residue of GlnA, thus reducing its activity. Conversely, when nitrogen levels are low, the N-terminal adenylyl removase (AR) activates GlnA by removing the adenylyl group by phosphorolysis, increasing its activity. The regulatory region of GlnE binds the signal transduction protein PII (GlnB) which indicates the nitrogen status of the cell. In Escherichia coli O127:H6 (strain E2348/69 / EPEC), this protein is Bifunctional glutamine synthetase adenylyltransferase/adenylyl-removing enzyme.